The following is a 415-amino-acid chain: Enolase (415 aa).

Gln-161 provides a ligand contact to (2R)-2-phosphoglycerate. Glu-203 (proton donor) is an active-site residue. Residues Asp-240, Glu-281, and Asp-308 each contribute to the Mg(2+) site. (2R)-2-phosphoglycerate is bound by residues Lys-333, Arg-362, Ser-363, and Lys-384. The active-site Proton acceptor is Lys-333.

This sequence belongs to the enolase family. The cofactor is Mg(2+).

The protein localises to the cytoplasm. It localises to the secreted. It is found in the cell surface. It carries out the reaction (2R)-2-phosphoglycerate = phosphoenolpyruvate + H2O. Its pathway is carbohydrate degradation; glycolysis; pyruvate from D-glyceraldehyde 3-phosphate: step 4/5. Functionally, catalyzes the reversible conversion of 2-phosphoglycerate (2-PG) into phosphoenolpyruvate (PEP). It is essential for the degradation of carbohydrates via glycolysis. The chain is Enolase from Campylobacter hominis (strain ATCC BAA-381 / DSM 21671 / CCUG 45161 / LMG 19568 / NCTC 13146 / CH001A).